Reading from the N-terminus, the 1454-residue chain is E3 ubiquitin-protein ligase substrate receptor MMS22 (1454 aa).

The tract at residues 159 to 178 (NSSVQSQRYDSDEEIPKKRH) is disordered. Residues 1201 to 1454 (YDEGDISRNF…SEPFKTFKNT (254 aa)) are required for interaction with MMS1.

It belongs to the MMS22 family. In terms of assembly, component of a cullin-RING ligase (CRL) composed of 4 subunits: the RING protein HRT1, the cullin RTT101, a linker protein MMS1, and the substrate receptor MMS22. This complex further interacts with RTT107 and CTF4 to form RTT101-MMS1-MMS22-RTT107 and RTT101-MMS1-MMS22-CTF4 complexes respectively. Interacts (via C-ter) with MMS1 (via N-ter). Interacts with RTT107.

It is found in the nucleus. In terms of biological role, substrate targeting component of a cullin-RING-based E3 ubiquitin-protein ligase complex RTT101(MMS1-MMS22). RTT101(MMS1-MMS22) promotes fork progression through damaged DNA or natural pause sites by stabilizing replication proteins like the replication fork-pausing complex (FPC) and leading-strand polymerase at stalled replication forks. RTT101(MMS1-MMS22) ubiquitinates the acetylated histones H3K56ac-H4 at lysine residues H3K121, H3K122 and H3K125. Ubiquitination is required for efficient histone deposition during replication-coupled nucleosome assembly, probably by facilitating the transfer of H3-H4 from ASF1 to other chaperones involved in histone deposition. In Saccharomyces cerevisiae (strain ATCC 204508 / S288c) (Baker's yeast), this protein is E3 ubiquitin-protein ligase substrate receptor MMS22 (MMS22).